Reading from the N-terminus, the 178-residue chain is M-phase-specific PLK1-interacting protein (178 aa).

The segment covering 1-15 (MHRPNFRPPTPPYPS) has biased composition (pro residues). Residues 1–134 (MHRPNFRPPT…RGREKRMSNE (134 aa)) are disordered. Residues 17-34 (GIGGWGGGNNFRGALGGG) are compositionally biased toward gly residues. R36 carries the post-translational modification Asymmetric dimethylarginine. Phosphoserine is present on residues S39 and S46. Position 50 is a phosphothreonine (T50). The residue at position 56 (R56) is an Omega-N-methylarginine. Asymmetric dimethylarginine is present on residues R58, R67, and R76. Residues 78 to 96 (GSPSPGGYPGSYSRSPAGS) show a composition bias toward low complexity. A phosphoserine mark is found at S79, S81, S92, S103, and S114. Over residues 97 to 121 (QHQFGYSPGQQQTYPQGSPRTSTPF) the composition is skewed to polar residues. R116 is subject to Omega-N-methylarginine. T119 bears the Phosphothreonine mark. A phosphoserine mark is found at S123 and S132.

In terms of assembly, interacts with PLK1; phosphorylation-dependent. Phosphorylated during mitosis in the cell cycle probably by CDK1.

The protein localises to the nucleus. It is found in the cytoplasm. It localises to the cytoskeleton. Its subcellular location is the microtubule organizing center. The protein resides in the centrosome. In terms of biological role, may play a role in maintenance of cell cycle integrity by regulating mitosis or cytokinesis. The sequence is that of M-phase-specific PLK1-interacting protein (Mplkip) from Mus musculus (Mouse).